Consider the following 194-residue polypeptide: Small ribosomal subunit protein uS4c (194 aa).

The 62-residue stretch at 82 to 143 (MRLDNILFRL…KQRSKALIQN (62 aa)) folds into the S4 RNA-binding domain.

The protein belongs to the universal ribosomal protein uS4 family. As to quaternary structure, part of the 30S ribosomal subunit. Contacts protein S5. The interaction surface between S4 and S5 is involved in control of translational fidelity.

The protein resides in the plastid. It localises to the chloroplast. In terms of biological role, one of the primary rRNA binding proteins, it binds directly to 16S rRNA where it nucleates assembly of the body of the 30S subunit. Functionally, with S5 and S12 plays an important role in translational accuracy. The polypeptide is Small ribosomal subunit protein uS4c (rps4) (Sisyrinchium striatum (Satin flower)).